Here is a 299-residue protein sequence, read N- to C-terminus: tRNA dimethylallyltransferase (299 aa).

Residue 10–17 coordinates ATP; it reads GPTAVGKT. 12 to 17 is a substrate binding site; it reads TAVGKT. Positions 35-38 are interaction with substrate tRNA; the sequence is DSQQ.

The protein belongs to the IPP transferase family. Monomer. The cofactor is Mg(2+).

It carries out the reaction adenosine(37) in tRNA + dimethylallyl diphosphate = N(6)-dimethylallyladenosine(37) in tRNA + diphosphate. In terms of biological role, catalyzes the transfer of a dimethylallyl group onto the adenine at position 37 in tRNAs that read codons beginning with uridine, leading to the formation of N6-(dimethylallyl)adenosine (i(6)A). This Streptococcus thermophilus (strain ATCC BAA-491 / LMD-9) protein is tRNA dimethylallyltransferase.